A 38-amino-acid chain; its full sequence is MKVQASVKKICGSCKVIRRNGVIRVICSAEPRHKQRQG.

This sequence belongs to the bacterial ribosomal protein bL36 family.

In Acinetobacter baylyi (strain ATCC 33305 / BD413 / ADP1), this protein is Large ribosomal subunit protein bL36.